Reading from the N-terminus, the 752-residue chain is Probable beta-glucosidase D (752 aa).

The first 18 residues, 1–18, serve as a signal peptide directing secretion; it reads MRFVSLAVGAALLGAAGA. N-linked (GlcNAc...) asparagine glycosylation is found at asparagine 187 and asparagine 237. Residue aspartate 265 is part of the active site. Asparagine 299, asparagine 343, asparagine 441, asparagine 510, asparagine 532, asparagine 571, asparagine 586, asparagine 638, asparagine 661, and asparagine 743 each carry an N-linked (GlcNAc...) asparagine glycan.

Belongs to the glycosyl hydrolase 3 family.

Its subcellular location is the secreted. It carries out the reaction Hydrolysis of terminal, non-reducing beta-D-glucosyl residues with release of beta-D-glucose.. Its pathway is glycan metabolism; cellulose degradation. In terms of biological role, beta-glucosidases are one of a number of cellulolytic enzymes involved in the degradation of cellulosic biomass. Catalyzes the last step releasing glucose from the inhibitory cellobiose. In Aspergillus oryzae (strain ATCC 42149 / RIB 40) (Yellow koji mold), this protein is Probable beta-glucosidase D (bglD).